The primary structure comprises 329 residues: DNA-directed RNA polymerase subunit alpha (329 aa).

Positions M1–R235 are alpha N-terminal domain (alpha-NTD). Positions F249–E329 are alpha C-terminal domain (alpha-CTD).

This sequence belongs to the RNA polymerase alpha chain family. In terms of assembly, homodimer. The RNAP catalytic core consists of 2 alpha, 1 beta, 1 beta' and 1 omega subunit. When a sigma factor is associated with the core the holoenzyme is formed, which can initiate transcription.

The enzyme catalyses RNA(n) + a ribonucleoside 5'-triphosphate = RNA(n+1) + diphosphate. DNA-dependent RNA polymerase catalyzes the transcription of DNA into RNA using the four ribonucleoside triphosphates as substrates. The sequence is that of DNA-directed RNA polymerase subunit alpha from Buchnera aphidicola subsp. Schizaphis graminum (strain Sg).